Consider the following 158-residue polypeptide: Transcription elongation factor GreA (158 aa).

It belongs to the GreA/GreB family.

Necessary for efficient RNA polymerase transcription elongation past template-encoded arresting sites. The arresting sites in DNA have the property of trapping a certain fraction of elongating RNA polymerases that pass through, resulting in locked ternary complexes. Cleavage of the nascent transcript by cleavage factors such as GreA or GreB allows the resumption of elongation from the new 3'terminus. GreA releases sequences of 2 to 3 nucleotides. The sequence is that of Transcription elongation factor GreA from Zymomonas mobilis subsp. mobilis (strain ATCC 31821 / ZM4 / CP4).